The following is a 397-amino-acid chain: DNA-directed RNA polymerase subunit Rpo1C (397 aa).

It belongs to the RNA polymerase beta' chain family. As to quaternary structure, part of the RNA polymerase complex.

The protein resides in the cytoplasm. It catalyses the reaction RNA(n) + a ribonucleoside 5'-triphosphate = RNA(n+1) + diphosphate. Its function is as follows. DNA-dependent RNA polymerase (RNAP) catalyzes the transcription of DNA into RNA using the four ribonucleoside triphosphates as substrates. Forms part of the jaw domain. This is DNA-directed RNA polymerase subunit Rpo1C from Pyrococcus abyssi (strain GE5 / Orsay).